Consider the following 264-residue polypeptide: Hemin import ATP-binding protein HmuV (264 aa).

In terms of domain architecture, ABC transporter spans 2–241 (IEVSGLSVRL…ATMLSVFGCA (240 aa)). 34 to 41 (GPNGSGKT) contributes to the ATP binding site.

This sequence belongs to the ABC transporter superfamily. Heme (hemin) importer (TC 3.A.1.14.5) family. In terms of assembly, the complex is composed of two ATP-binding proteins (HmuV), two transmembrane proteins (HmuU) and a solute-binding protein (HmuT).

The protein localises to the cell inner membrane. Part of the ABC transporter complex HmuTUV involved in hemin import. Responsible for energy coupling to the transport system. The protein is Hemin import ATP-binding protein HmuV of Rhizobium etli (strain ATCC 51251 / DSM 11541 / JCM 21823 / NBRC 15573 / CFN 42).